Here is a 901-residue protein sequence, read N- to C-terminus: Translation initiation factor IF-2 (901 aa).

The segment at H48–P313 is disordered. Over residues S68–V82 the composition is skewed to polar residues. A compositionally biased stretch (basic and acidic residues) spans A106–W226. Residues A263–S277 show a composition bias toward basic residues. Positions K278 to A291 are enriched in basic and acidic residues. The tr-type G domain occupies P400 to K569. A G1 region spans residues G409–T416. G409 to T416 serves as a coordination point for GTP. Positions G434 to H438 are G2. A G3 region spans residues D455 to G458. Residues D455–H459 and N509–D512 contribute to the GTP site. Residues N509 to D512 form a G4 region. The interval S545 to K547 is G5.

It belongs to the TRAFAC class translation factor GTPase superfamily. Classic translation factor GTPase family. IF-2 subfamily.

The protein resides in the cytoplasm. Its function is as follows. One of the essential components for the initiation of protein synthesis. Protects formylmethionyl-tRNA from spontaneous hydrolysis and promotes its binding to the 30S ribosomal subunits. Also involved in the hydrolysis of GTP during the formation of the 70S ribosomal complex. The protein is Translation initiation factor IF-2 of Edwardsiella ictaluri (strain 93-146).